We begin with the raw amino-acid sequence, 814 residues long: Acyl-coenzyme A dehydrogenase (814 aa).

Glu-497 serves as the catalytic Proton acceptor.

Belongs to the acyl-CoA dehydrogenase family. FAD is required as a cofactor.

The catalysed reaction is a medium-chain 2,3-saturated fatty acyl-CoA + oxidized [electron-transfer flavoprotein] + H(+) = a medium-chain (2E)-enoyl-CoA + reduced [electron-transfer flavoprotein]. It carries out the reaction a long-chain 2,3-saturated fatty acyl-CoA + oxidized [electron-transfer flavoprotein] + H(+) = a long-chain (2E)-enoyl-CoA + reduced [electron-transfer flavoprotein]. It functions in the pathway lipid metabolism; fatty acid beta-oxidation. Functionally, catalyzes the dehydrogenation of acyl-coenzymes A (acyl-CoAs) to 2-enoyl-CoAs, the first step of the beta-oxidation cycle of fatty acid degradation. Is required for E.coli to utilize dodecanoate or oleate as the sole carbon and energy source for growth. The chain is Acyl-coenzyme A dehydrogenase from Escherichia coli (strain K12).